The chain runs to 506 residues: Glycerol kinase (506 aa).

Threonine 14 serves as a coordination point for ADP. ATP is bound by residues threonine 14, threonine 15, and serine 16. Sn-glycerol 3-phosphate is bound at residue threonine 14. Arginine 18 lines the ADP pocket. Positions 84, 85, and 136 each coordinate sn-glycerol 3-phosphate. 3 residues coordinate glycerol: arginine 84, glutamate 85, and tyrosine 136. Position 232 is a phosphohistidine; by HPr (histidine 232). Residue aspartate 246 participates in sn-glycerol 3-phosphate binding. Residues aspartate 246 and glutamine 247 each contribute to the glycerol site. ADP is bound by residues threonine 268 and glycine 311. Residues threonine 268, glycine 311, glutamine 315, and glycine 412 each contribute to the ATP site. Residues glycine 412 and asparagine 416 each contribute to the ADP site.

This sequence belongs to the FGGY kinase family. As to quaternary structure, homotetramer and homodimer (in equilibrium). In terms of processing, the phosphoenolpyruvate-dependent sugar phosphotransferase system (PTS), including enzyme I, and histidine-containing protein (HPr) are required for the phosphorylation of His-232, which leads to the activation of the enzyme.

The enzyme catalyses glycerol + ATP = sn-glycerol 3-phosphate + ADP + H(+). It participates in polyol metabolism; glycerol degradation via glycerol kinase pathway; sn-glycerol 3-phosphate from glycerol: step 1/1. Activated by phosphorylation and inhibited by fructose 1,6-bisphosphate (FBP). Its function is as follows. Key enzyme in the regulation of glycerol uptake and metabolism. Catalyzes the phosphorylation of glycerol to yield sn-glycerol 3-phosphate. The chain is Glycerol kinase from Enterococcus casseliflavus (Enterococcus flavescens).